Here is a 223-residue protein sequence, read N- to C-terminus: Coiled-coil domain-containing protein 124 (223 aa).

Residues 1–126 form a disordered region; it reads MPKKFQGENT…AEKAKSHLEV (126 aa). The stretch at 15 to 82 forms a coiled coil; it reads ARARRAEAKA…LLEEEDSKLK (68 aa). 2 stretches are compositionally biased toward basic and acidic residues: residues 18–74 and 99–126; these read RRAE…QRLL and QIED…HLEV. Phosphoserine occurs at positions 141 and 194. Residues 204–223 are disordered; sequence WLRSPDNPMNQRAVPFNAPK.

This sequence belongs to the CCDC124 family. Associates with translationally inactive ribosomes in the nonrotated state. Interacts with RASGEF1B. Ubiquitously expressed.

It is found in the cytoplasm. The protein localises to the cytoskeleton. Its subcellular location is the microtubule organizing center. It localises to the centrosome. The protein resides in the midbody. In terms of biological role, ribosome-binding protein involved in ribosome hibernation: associates with translationally inactive ribosomes and stabilizes the nonrotated conformation of the 80S ribosome, thereby promoting ribosome preservation and storage. Also required for proper progression of late cytokinetic stages. The chain is Coiled-coil domain-containing protein 124 from Homo sapiens (Human).